The chain runs to 523 residues: Probable glucose-1-phosphate adenylyltransferase large subunit, chloroplastic (523 aa).

This sequence belongs to the bacterial/plant glucose-1-phosphate adenylyltransferase family. As to quaternary structure, heterotetramer.

It localises to the plastid. The protein resides in the chloroplast. The catalysed reaction is alpha-D-glucose 1-phosphate + ATP + H(+) = ADP-alpha-D-glucose + diphosphate. It functions in the pathway glycan biosynthesis; starch biosynthesis. Activated by 3'phosphoglycerate, inhibited by orthophosphate. Allosteric regulation. Its function is as follows. This protein plays a role in synthesis of starch. It catalyzes the synthesis of the activated glycosyl donor, ADP-glucose from Glc-1-P and ATP. The chain is Probable glucose-1-phosphate adenylyltransferase large subunit, chloroplastic from Arabidopsis thaliana (Mouse-ear cress).